A 456-amino-acid polypeptide reads, in one-letter code: Bifunctional protein GlmU (456 aa).

The segment at 1–229 (MLNNAMSVVI…LSEVEGVNNR (229 aa)) is pyrophosphorylase. Residues 11 to 14 (LAAG), Lys25, Gln76, 81 to 82 (GT), 103 to 105 (YGD), Gly140, Glu154, Asn169, and Asn227 contribute to the UDP-N-acetyl-alpha-D-glucosamine site. Residue Asp105 coordinates Mg(2+). Asn227 is a binding site for Mg(2+). The segment at 230-250 (LQLSRLERVYQSEQAEKLLLA) is linker. An N-acetyltransferase region spans residues 251-456 (GVMLRDPARF…EGWRRPVKKK (206 aa)). Positions 333 and 351 each coordinate UDP-N-acetyl-alpha-D-glucosamine. His363 serves as the catalytic Proton acceptor. UDP-N-acetyl-alpha-D-glucosamine contacts are provided by Tyr366 and Asn377. Acetyl-CoA contacts are provided by residues Ala380, 386–387 (NY), Ser405, Ala423, and Arg440.

It in the N-terminal section; belongs to the N-acetylglucosamine-1-phosphate uridyltransferase family. The protein in the C-terminal section; belongs to the transferase hexapeptide repeat family. As to quaternary structure, homotrimer. It depends on Mg(2+) as a cofactor.

The protein resides in the cytoplasm. It catalyses the reaction alpha-D-glucosamine 1-phosphate + acetyl-CoA = N-acetyl-alpha-D-glucosamine 1-phosphate + CoA + H(+). The enzyme catalyses N-acetyl-alpha-D-glucosamine 1-phosphate + UTP + H(+) = UDP-N-acetyl-alpha-D-glucosamine + diphosphate. Its pathway is nucleotide-sugar biosynthesis; UDP-N-acetyl-alpha-D-glucosamine biosynthesis; N-acetyl-alpha-D-glucosamine 1-phosphate from alpha-D-glucosamine 6-phosphate (route II): step 2/2. It functions in the pathway nucleotide-sugar biosynthesis; UDP-N-acetyl-alpha-D-glucosamine biosynthesis; UDP-N-acetyl-alpha-D-glucosamine from N-acetyl-alpha-D-glucosamine 1-phosphate: step 1/1. The protein operates within bacterial outer membrane biogenesis; LPS lipid A biosynthesis. Functionally, catalyzes the last two sequential reactions in the de novo biosynthetic pathway for UDP-N-acetylglucosamine (UDP-GlcNAc). The C-terminal domain catalyzes the transfer of acetyl group from acetyl coenzyme A to glucosamine-1-phosphate (GlcN-1-P) to produce N-acetylglucosamine-1-phosphate (GlcNAc-1-P), which is converted into UDP-GlcNAc by the transfer of uridine 5-monophosphate (from uridine 5-triphosphate), a reaction catalyzed by the N-terminal domain. The protein is Bifunctional protein GlmU of Escherichia coli O81 (strain ED1a).